The following is a 61-amino-acid chain: Sec-independent protein translocase protein TatA (61 aa).

The chain crosses the membrane as a helical span at residues 2 to 22 (GLSGISPLSLLLILAIIVALF).

Belongs to the TatA/E family. In terms of assembly, the Tat system comprises two distinct complexes: a TatABC complex, containing multiple copies of TatA, TatB and TatC subunits, and a separate TatA complex, containing only TatA subunits. Substrates initially bind to the TatABC complex, which probably triggers association of the separate TatA complex to form the active translocon.

It localises to the cell inner membrane. Functionally, part of the twin-arginine translocation (Tat) system that transports large folded proteins containing a characteristic twin-arginine motif in their signal peptide across membranes. TatA could form the protein-conducting channel of the Tat system. The sequence is that of Sec-independent protein translocase protein TatA from Legionella pneumophila (strain Corby).